Reading from the N-terminus, the 668-residue chain is Fructose-1,6-bisphosphatase class 3 (668 aa).

Belongs to the FBPase class 3 family. Mn(2+) serves as cofactor.

It carries out the reaction beta-D-fructose 1,6-bisphosphate + H2O = beta-D-fructose 6-phosphate + phosphate. The protein operates within carbohydrate biosynthesis; gluconeogenesis. The protein is Fructose-1,6-bisphosphatase class 3 of Clostridium botulinum (strain ATCC 19397 / Type A).